A 285-amino-acid polypeptide reads, in one-letter code: Bifunctional protein FolD (285 aa).

Residues 165–167 (GRS) and Ser190 contribute to the NADP(+) site.

It belongs to the tetrahydrofolate dehydrogenase/cyclohydrolase family. As to quaternary structure, homodimer.

The catalysed reaction is (6R)-5,10-methylene-5,6,7,8-tetrahydrofolate + NADP(+) = (6R)-5,10-methenyltetrahydrofolate + NADPH. It carries out the reaction (6R)-5,10-methenyltetrahydrofolate + H2O = (6R)-10-formyltetrahydrofolate + H(+). It participates in one-carbon metabolism; tetrahydrofolate interconversion. Catalyzes the oxidation of 5,10-methylenetetrahydrofolate to 5,10-methenyltetrahydrofolate and then the hydrolysis of 5,10-methenyltetrahydrofolate to 10-formyltetrahydrofolate. This Streptococcus pneumoniae (strain ATCC BAA-255 / R6) protein is Bifunctional protein FolD.